The chain runs to 338 residues: Lipoate-protein ligase A (338 aa).

Residues 29 to 216 (PATQRVLFLW…AFFAHYGERV (188 aa)) form the BPL/LPL catalytic domain. ATP-binding positions include Arg71, 76–79 (GAVF), and Lys134. Lys134 provides a ligand contact to (R)-lipoate.

Belongs to the LplA family. In terms of assembly, monomer.

Its subcellular location is the cytoplasm. The catalysed reaction is L-lysyl-[lipoyl-carrier protein] + (R)-lipoate + ATP = N(6)-[(R)-lipoyl]-L-lysyl-[lipoyl-carrier protein] + AMP + diphosphate + H(+). It participates in protein modification; protein lipoylation via exogenous pathway; protein N(6)-(lipoyl)lysine from lipoate: step 1/2. The protein operates within protein modification; protein lipoylation via exogenous pathway; protein N(6)-(lipoyl)lysine from lipoate: step 2/2. Functionally, catalyzes both the ATP-dependent activation of exogenously supplied lipoate to lipoyl-AMP and the transfer of the activated lipoyl onto the lipoyl domains of lipoate-dependent enzymes. The chain is Lipoate-protein ligase A from Escherichia coli O1:K1 / APEC.